The primary structure comprises 255 residues: Ditrans,polycis-undecaprenyl-diphosphate synthase ((2E,6E)-farnesyl-diphosphate specific) (255 aa).

Asp21 is an active-site residue. Asp21 is a binding site for Mg(2+). Substrate is bound by residues 22-25, Trp26, Arg34, His38, and 66-68; these read GNGR and SSE. Residue Asn69 is the Proton acceptor of the active site. Substrate-binding positions include Trp70, Arg72, Arg189, and 195–197; that span reads RIS. Glu208 contributes to the Mg(2+) binding site.

It belongs to the UPP synthase family. In terms of assembly, homodimer. Mg(2+) is required as a cofactor.

The catalysed reaction is 8 isopentenyl diphosphate + (2E,6E)-farnesyl diphosphate = di-trans,octa-cis-undecaprenyl diphosphate + 8 diphosphate. Its function is as follows. Catalyzes the sequential condensation of isopentenyl diphosphate (IPP) with (2E,6E)-farnesyl diphosphate (E,E-FPP) to yield (2Z,6Z,10Z,14Z,18Z,22Z,26Z,30Z,34E,38E)-undecaprenyl diphosphate (di-trans,octa-cis-UPP). UPP is the precursor of glycosyl carrier lipid in the biosynthesis of bacterial cell wall polysaccharide components such as peptidoglycan and lipopolysaccharide. The polypeptide is Ditrans,polycis-undecaprenyl-diphosphate synthase ((2E,6E)-farnesyl-diphosphate specific) (Xylella fastidiosa (strain 9a5c)).